Consider the following 116-residue polypeptide: Ferredoxin-like protein in nif region (116 aa).

The 4Fe-4S ferredoxin-type domain occupies 2–29; that stretch reads AYTITSQCISCKLCSSVCPTGAIKIAEN. Iron-sulfur cluster is bound by residues Cys9, Cys12, Cys15, and Cys19.

This is Ferredoxin-like protein in nif region (fdxN) from Nostoc sp. (strain PCC 7120 / SAG 25.82 / UTEX 2576).